The following is a 735-amino-acid chain: Exocyst complex component 7 (735 aa).

2 coiled-coil regions span residues 5–42 (QEAS…TKNM) and 63–85 (VHKQ…SCLD). Phosphoserine is present on S133. The segment at 239–268 (HKSSSSSGVPYSPAIPNKRKDTPTKKPVKR) is disordered.

The protein belongs to the EXO70 family. In terms of assembly, the exocyst complex is composed of EXOC1, EXOC2, EXOC3, EXOC4, EXOC5, EXOC6, EXOC7 and EXOC8. Interacts with ARHQ in a GTP-dependent manner. Interacts with RAB11FIP3. Abundant in the ventricular zone, the outer subventricular zone and the cortical plate of the fetal cortex.

Its subcellular location is the cytoplasm. It localises to the cytosol. The protein resides in the cell membrane. It is found in the midbody. The protein localises to the midbody ring. Its function is as follows. Component of the exocyst complex involved in the docking of exocytic vesicles with fusion sites on the plasma membrane. In adipocytes, plays a crucial role in targeting SLC2A4 vesicle to the plasma membrane in response to insulin, perhaps directing the vesicle to the precise site of fusion. It is required for neuron survival and plays an essential role in cortical development. In Homo sapiens (Human), this protein is Exocyst complex component 7 (EXOC7).